We begin with the raw amino-acid sequence, 315 residues long: Homoserine kinase (315 aa).

An ATP-binding site is contributed by 97-107 (PPARGLGSSAT).

This sequence belongs to the GHMP kinase family. Homoserine kinase subfamily.

Its subcellular location is the cytoplasm. The catalysed reaction is L-homoserine + ATP = O-phospho-L-homoserine + ADP + H(+). It functions in the pathway amino-acid biosynthesis; L-threonine biosynthesis; L-threonine from L-aspartate: step 4/5. Its function is as follows. Catalyzes the ATP-dependent phosphorylation of L-homoserine to L-homoserine phosphate. The chain is Homoserine kinase from Prochlorococcus marinus (strain MIT 9301).